The following is a 121-amino-acid chain: Fluoride-specific ion channel FluC 2 (121 aa).

4 consecutive transmembrane segments (helical) span residues 3 to 23 (YLFVFIGGLFGALLRYVLSTL), 27 to 47 (SGLPLGTLIANIVGAFLMGYL), 64 to 84 (GVTTGLLGALTTFSTFQFELV), and 92 to 112 (IALLFIYGLTSYIGGILFCWF). Positions 71 and 74 each coordinate Na(+).

The protein belongs to the fluoride channel Fluc/FEX (TC 1.A.43) family.

The protein resides in the cell membrane. It catalyses the reaction fluoride(in) = fluoride(out). With respect to regulation, na(+) is not transported, but it plays an essential structural role and its presence is essential for fluoride channel function. Fluoride-specific ion channel. Important for reducing fluoride concentration in the cell, thus reducing its toxicity. The polypeptide is Fluoride-specific ion channel FluC 2 (Staphylococcus haemolyticus (strain JCSC1435)).